A 297-amino-acid polypeptide reads, in one-letter code: Formamidopyrimidine-DNA glycosylase (297 aa).

Residue P2 is the Schiff-base intermediate with DNA of the active site. The active-site Proton donor is the E3. K58 acts as the Proton donor; for beta-elimination activity in catalysis. DNA-binding residues include H104, R127, and K170. The FPG-type zinc-finger motif lies at 261–297 (NVYDREGEACRTPGCTGTVERMTQAGRSTFHCPQCQR). R287 functions as the Proton donor; for delta-elimination activity in the catalytic mechanism.

It belongs to the FPG family. As to quaternary structure, monomer. Requires Zn(2+) as cofactor.

The catalysed reaction is Hydrolysis of DNA containing ring-opened 7-methylguanine residues, releasing 2,6-diamino-4-hydroxy-5-(N-methyl)formamidopyrimidine.. The enzyme catalyses 2'-deoxyribonucleotide-(2'-deoxyribose 5'-phosphate)-2'-deoxyribonucleotide-DNA = a 3'-end 2'-deoxyribonucleotide-(2,3-dehydro-2,3-deoxyribose 5'-phosphate)-DNA + a 5'-end 5'-phospho-2'-deoxyribonucleoside-DNA + H(+). Involved in base excision repair of DNA damaged by oxidation or by mutagenic agents. Acts as a DNA glycosylase that recognizes and removes damaged bases. Has a preference for oxidized purines, such as 7,8-dihydro-8-oxoguanine (8-oxoG). Has AP (apurinic/apyrimidinic) lyase activity and introduces nicks in the DNA strand. Cleaves the DNA backbone by beta-delta elimination to generate a single-strand break at the site of the removed base with both 3'- and 5'-phosphates. This chain is Formamidopyrimidine-DNA glycosylase, found in Allorhizobium ampelinum (strain ATCC BAA-846 / DSM 112012 / S4) (Agrobacterium vitis (strain S4)).